The sequence spans 253 residues: Malonyl-[acyl-carrier protein] O-methyltransferase (253 aa).

It belongs to the methyltransferase superfamily.

The catalysed reaction is malonyl-[ACP] + S-adenosyl-L-methionine = malonyl-[ACP] methyl ester + S-adenosyl-L-homocysteine. Its pathway is cofactor biosynthesis; biotin biosynthesis. In terms of biological role, converts the free carboxyl group of a malonyl-thioester to its methyl ester by transfer of a methyl group from S-adenosyl-L-methionine (SAM). It allows to synthesize pimeloyl-ACP via the fatty acid synthetic pathway. This is Malonyl-[acyl-carrier protein] O-methyltransferase from Pectobacterium atrosepticum (strain SCRI 1043 / ATCC BAA-672) (Erwinia carotovora subsp. atroseptica).